The primary structure comprises 492 residues: Protein PAIR1 (492 aa).

Residues 166 to 186 (VDSVQSDVMQLNRAMKEASLD) adopt a coiled-coil conformation. The short motif at 479-483 (KRRRR) is the Nuclear localization signal element.

In terms of assembly, interacts with CRC1. In terms of tissue distribution, expressed in reproductive organs, but not in vegetative organs.

It localises to the nucleus. Functionally, involved in spore formation. Plays an essential role in the establishment of homologous chromosome pairing in early meiosis. The sequence is that of Protein PAIR1 (PAIR1) from Oryza sativa subsp. japonica (Rice).